We begin with the raw amino-acid sequence, 287 residues long: MKSRLFIISQYLLPHHLLSRLAGCIAECRVRWFKNAFTAWFAKRYQVNMSEALVEDLSAYEHFNAFFTRALKPGARPLDETPGAILCPADGAVSQLGPIEHGRIFQAKGHGFSAQELLGGDPAMAAPFMGGEFATIYLSPKDYHRVHMPLAGTLREMVYVPGRLFSVNQTTAENVPELFARNERVVCLFDTERGPMAVVLVGAMIVASIETVWAGLVTPPKRELKTFRYDEASRTPIHLEKGAELGRFKLGSTAIVLFGPEQVKWAESLGAGSAVRMGQQLAAPVQA.

Residues Asp90, His147, and Ser252 each act as charge relay system; for autoendoproteolytic cleavage activity in the active site. Ser252 functions as the Schiff-base intermediate with substrate; via pyruvic acid; for decarboxylase activity in the catalytic mechanism. Ser252 bears the Pyruvic acid (Ser); by autocatalysis mark.

Belongs to the phosphatidylserine decarboxylase family. PSD-B subfamily. Prokaryotic type I sub-subfamily. As to quaternary structure, heterodimer of a large membrane-associated beta subunit and a small pyruvoyl-containing alpha subunit. Pyruvate is required as a cofactor. In terms of processing, is synthesized initially as an inactive proenzyme. Formation of the active enzyme involves a self-maturation process in which the active site pyruvoyl group is generated from an internal serine residue via an autocatalytic post-translational modification. Two non-identical subunits are generated from the proenzyme in this reaction, and the pyruvate is formed at the N-terminus of the alpha chain, which is derived from the carboxyl end of the proenzyme. The autoendoproteolytic cleavage occurs by a canonical serine protease mechanism, in which the side chain hydroxyl group of the serine supplies its oxygen atom to form the C-terminus of the beta chain, while the remainder of the serine residue undergoes an oxidative deamination to produce ammonia and the pyruvoyl prosthetic group on the alpha chain. During this reaction, the Ser that is part of the protease active site of the proenzyme becomes the pyruvoyl prosthetic group, which constitutes an essential element of the active site of the mature decarboxylase.

It localises to the cell membrane. It carries out the reaction a 1,2-diacyl-sn-glycero-3-phospho-L-serine + H(+) = a 1,2-diacyl-sn-glycero-3-phosphoethanolamine + CO2. Its pathway is phospholipid metabolism; phosphatidylethanolamine biosynthesis; phosphatidylethanolamine from CDP-diacylglycerol: step 2/2. Catalyzes the formation of phosphatidylethanolamine (PtdEtn) from phosphatidylserine (PtdSer). This chain is Phosphatidylserine decarboxylase proenzyme, found in Pseudomonas putida (strain ATCC 700007 / DSM 6899 / JCM 31910 / BCRC 17059 / LMG 24140 / F1).